A 1120-amino-acid chain; its full sequence is Terminal uridylyltransferase 1 (1120 aa).

Disordered regions lie at residues 1 to 156 (MSKY…SAVE) and 196 to 221 (AALI…PHTP). Polar residues predominate over residues 7–16 (LFNQGTKDGT). Residues 17–59 (NASSGSEANSANITSSSAPASSTNTSSPTSSESAVVSPPASTS) are compositionally biased toward low complexity. The segment covering 60-70 (PRRRLIHRRHG) has biased composition (basic residues). Residues 90 to 103 (NEEKHENFISDSVH) show a composition bias toward basic and acidic residues. Over residues 118-128 (LTTSGSETVMS) the composition is skewed to polar residues. Low complexity-rich tracts occupy residues 134 to 154 (AFEA…STSA) and 207 to 217 (SSAVSSSSSGS). A C2H2-type; atypical zinc finger spans residues 222–253 (PRLFTCDMCLQYVSTSYEALEQHALDQHGDAL). Residues Cys-227, Cys-230, His-244, and His-249 each coordinate Zn(2+). Residues Ser-330 and 341 to 344 (SDID) contribute to the UTP site. The Mg(2+) site is built by Asp-342 and Asp-344. Position 390 (Arg-390) interacts with RNA. Asp-548 provides a ligand contact to Mg(2+). UTP is bound by residues 555 to 559 (GIRNS), Lys-580, Lys-584, and 598 to 599 (SY). The PAP-associated domain occupies 659–697 (GELLLGFFYYYAFEFDWVNHVVSLNRPGITTKASLGWDV). The tract at residues 750 to 1120 (GMMASSASAA…ARRVLRLLFR (371 aa)) is important for catalytic activity and RNA binding. The short motif at 773–782 (IEDPYEENLN) is the Nucleotide recognition motif (NRM) element. Positions 800–900 (YRGLLSLLKD…LLSDLEAAFL (101 aa)) are involved in oligomerization. The segment at 1047–1076 (PSTTTQGEDPLASGTCEQGGVSPSLPTGAP) is disordered.

This sequence belongs to the DNA polymerase type-B-like family. In terms of assembly, homotetramer. Part of a 700kDa complex. Interacts with p45 and p50 RNA ligases. Mg(2+) is required as a cofactor. Requires Mn(2+) as cofactor.

The protein resides in the mitochondrion. It carries out the reaction RNA(n) + UTP = RNA(n)-3'-uridine ribonucleotide + diphosphate. Its activity is regulated as follows. Zinc-binding is required for catalytic activity. Functionally, terminal uridylyltransferase which is involved in the post-transcriptional editing of mitochondrial RNA, a process involving the addition and deletion of uridine (U) nucleotides in the pre-mRNA. Specifically, catalyzes the addition of Us to the 3'-hydroxyl group of guided RNA (gRNA), with a preference for RNAs terminating in 6 Us, but also can add Us to RNAs terminating in 6 adenines (A), 6 cytosines (C), or 6 guanines (G). Can mediate RNA-independent UTP polymerization in vitro. Can mediate pyrophosphate-dependent degradation of synthetic RNA ending with U residues in vitro. The sequence is that of Terminal uridylyltransferase 1 from Leishmania tarentolae (Sauroleishmania tarentolae).